The sequence spans 416 residues: Lactose permease (416 aa).

Residues 1–13 lie on the Cytoplasmic side of the membrane; it reads MYYLKNTNFWMFG. Residues 14 to 34 form a helical membrane-spanning segment; that stretch reads FFFFFYFFIMGAYFPFFPIWL. The Periplasmic segment spans residues 35-45; the sequence is HEVNHISKGDT. Residues 46 to 66 form a helical membrane-spanning segment; the sequence is GIIFACISLFSLLFQPIFGLL. At 67-75 the chain is on the cytoplasmic side; that stretch reads SDKLGLRKH. A helical membrane pass occupies residues 76–96; it reads LLWVITGMLVMFAPFFIYVFG. A topological domain (periplasmic) is located at residue Pro97. The helical transmembrane segment at 98–118 threads the bilayer; it reads LLQVNILLGSIVGGIYLGFIY. Residues 119–144 are Cytoplasmic-facing; it reads NAGAPAIEAYIEKASRRSNFEFGRAR. The helical transmembrane segment at 145–165 threads the bilayer; it reads MFGCVGWALCASIAGIMFTIN. Residue Asn166 is a topological domain, periplasmic. Residues 167–187 traverse the membrane as a helical segment; the sequence is QFVFWLGSGCAVILALLLLFS. The Cytoplasmic portion of the chain corresponds to 188–211; sequence KTDVPSSAKVADAVGANNSAFSLK. The chain crosses the membrane as a helical span at residues 212-232; the sequence is LALELFKQPKLWLISLYVVGV. Residues 233-262 are Periplasmic-facing; that stretch reads SCTYDVFDQQFANFFTSFFATGEQGTRVFG. A helical membrane pass occupies residues 263–283; the sequence is YVTTMGELLNASIMFFAPLIV. Topologically, residues 284–290 are cytoplasmic; sequence NRIGGKN. The chain crosses the membrane as a helical span at residues 291–309; sequence ALLLAGTIMSVRIIGSHSH. Topologically, residues 310–314 are periplasmic; it reads TALEV. Residues 315-336 form a helical membrane-spanning segment; the sequence is VILKTLHMFEIPFLIVGCFKYI. The Cytoplasmic segment spans residues 337 to 347; it reads TSQFEVRFSAT. The chain crosses the membrane as a helical span at residues 348 to 368; sequence IYLVCFCFFKQLAMIFMSVLA. Topologically, residues 369–378 are periplasmic; that stretch reads GKMYESIGFQ. The helical transmembrane segment at 379 to 399 threads the bilayer; the sequence is GAYLVLGIIRVSFTLISVFTL. At 400 to 416 the chain is on the cytoplasmic side; it reads SGPGPFSLLRRRESVAL.

This sequence belongs to the major facilitator superfamily. Oligosaccharide:H(+) symporter (OHS) (TC 2.A.1.5) family.

The protein localises to the cell inner membrane. It catalyses the reaction lactose(in) + H(+)(in) = lactose(out) + H(+)(out). Functionally, responsible for transport of beta-galactosides into the cell, with the concomitant import of a proton (symport system). The polypeptide is Lactose permease (lacY) (Citrobacter freundii).